The chain runs to 213 residues: Phosphoheptose isomerase (213 aa).

An SIS domain is found at 50–208 (MAETFEGGGR…IDLVERMLGY (159 aa)). 65-67 (NGG) lines the substrate pocket. Positions 74 and 78 each coordinate Zn(2+). Substrate contacts are provided by residues glutamate 78, 109–110 (ND), 135–137 (STS), serine 140, and glutamine 188. Residues glutamine 188 and histidine 196 each contribute to the Zn(2+) site.

It belongs to the SIS family. GmhA subfamily. Zn(2+) serves as cofactor.

Its subcellular location is the cytoplasm. The catalysed reaction is 2 D-sedoheptulose 7-phosphate = D-glycero-alpha-D-manno-heptose 7-phosphate + D-glycero-beta-D-manno-heptose 7-phosphate. It functions in the pathway carbohydrate biosynthesis; D-glycero-D-manno-heptose 7-phosphate biosynthesis; D-glycero-alpha-D-manno-heptose 7-phosphate and D-glycero-beta-D-manno-heptose 7-phosphate from sedoheptulose 7-phosphate: step 1/1. Its function is as follows. Catalyzes the isomerization of sedoheptulose 7-phosphate in D-glycero-D-manno-heptose 7-phosphate. In Chlorobium phaeovibrioides (strain DSM 265 / 1930) (Prosthecochloris vibrioformis (strain DSM 265)), this protein is Phosphoheptose isomerase.